A 140-amino-acid polypeptide reads, in one-letter code: Large-conductance mechanosensitive channel (140 aa).

A run of 2 helical transmembrane segments spans residues 11 to 31 (FAMR…GAFG) and 82 to 102 (GNFI…FLLV).

Belongs to the MscL family. As to quaternary structure, homopentamer.

It is found in the cell inner membrane. In terms of biological role, channel that opens in response to stretch forces in the membrane lipid bilayer. May participate in the regulation of osmotic pressure changes within the cell. The protein is Large-conductance mechanosensitive channel of Parabacteroides distasonis (strain ATCC 8503 / DSM 20701 / CIP 104284 / JCM 5825 / NCTC 11152).